A 732-amino-acid polypeptide reads, in one-letter code: Catalase-peroxidase (732 aa).

The tract at residues 1–26 (MDAKTDDQGGKCPFPHGGGSRGHRNR) is disordered. The segment at residues 97 to 219 (WHSAGTYRTT…LGAVQMGLIY (123 aa)) is a cross-link (tryptophyl-tyrosyl-methioninium (Trp-Tyr) (with M-245)). Catalysis depends on H98, which acts as the Proton acceptor. The tryptophyl-tyrosyl-methioninium (Tyr-Met) (with W-97) cross-link spans 219–245 (YVNPEGPNGNPDPVAAAKDIRETFARM). H260 provides a ligand contact to heme b.

This sequence belongs to the peroxidase family. Peroxidase/catalase subfamily. In terms of assembly, homodimer or homotetramer. It depends on heme b as a cofactor. Formation of the three residue Trp-Tyr-Met cross-link is important for the catalase, but not the peroxidase activity of the enzyme.

It carries out the reaction H2O2 + AH2 = A + 2 H2O. It catalyses the reaction 2 H2O2 = O2 + 2 H2O. Its function is as follows. Bifunctional enzyme with both catalase and broad-spectrum peroxidase activity. The sequence is that of Catalase-peroxidase from Rhodopseudomonas palustris (strain BisB5).